A 252-amino-acid chain; its full sequence is Adenosylcobinamide-GDP ribazoletransferase (252 aa).

The next 7 helical transmembrane spans lie at 4–24, 38–58, 60–80, 113–133, 141–161, 190–210, and 232–252; these read LFKG…PYVE, PIIG…INYL, ISIV…TGML, FSVI…HSFL, ILMF…ITII, LVCI…LLIV, and VAGF…CLFT.

The protein belongs to the CobS family. Mg(2+) is required as a cofactor.

It localises to the cell membrane. The enzyme catalyses alpha-ribazole + adenosylcob(III)inamide-GDP = adenosylcob(III)alamin + GMP + H(+). It carries out the reaction alpha-ribazole 5'-phosphate + adenosylcob(III)inamide-GDP = adenosylcob(III)alamin 5'-phosphate + GMP + H(+). Its pathway is cofactor biosynthesis; adenosylcobalamin biosynthesis; adenosylcobalamin from cob(II)yrinate a,c-diamide: step 7/7. Its function is as follows. Joins adenosylcobinamide-GDP and alpha-ribazole to generate adenosylcobalamin (Ado-cobalamin). Also synthesizes adenosylcobalamin 5'-phosphate from adenosylcobinamide-GDP and alpha-ribazole 5'-phosphate. This chain is Adenosylcobinamide-GDP ribazoletransferase, found in Clostridium botulinum (strain Eklund 17B / Type B).